Consider the following 183-residue polypeptide: Ribosome-recycling factor (183 aa).

Belongs to the RRF family.

It localises to the cytoplasm. Responsible for the release of ribosomes from messenger RNA at the termination of protein biosynthesis. May increase the efficiency of translation by recycling ribosomes from one round of translation to another. The chain is Ribosome-recycling factor from Bifidobacterium longum subsp. infantis (strain ATCC 15697 / DSM 20088 / JCM 1222 / NCTC 11817 / S12).